Here is a 149-residue protein sequence, read N- to C-terminus: MNLVFNAPSTDKSELEDAGDFTPRFDDRGLITAIVTDAHDGELLMVAHMNAEALALTIKTKTAHYYSRSRGKLWKKGETSGNLQTVTEIRTDCDQDAIWLKVVVAGHDATCHTGRRSCFYRTVELEDGKPVLNVVDDHLHFDPSEIYRK.

D92 contacts Mg(2+). C93 provides a ligand contact to Zn(2+). Residues D94 and D96 each contribute to the Mg(2+) site. Positions 111 and 118 each coordinate Zn(2+).

The protein belongs to the PRA-CH family. In terms of assembly, homodimer. Requires Mg(2+) as cofactor. Zn(2+) serves as cofactor.

The protein resides in the cytoplasm. The enzyme catalyses 1-(5-phospho-beta-D-ribosyl)-5'-AMP + H2O = 1-(5-phospho-beta-D-ribosyl)-5-[(5-phospho-beta-D-ribosylamino)methylideneamino]imidazole-4-carboxamide. It functions in the pathway amino-acid biosynthesis; L-histidine biosynthesis; L-histidine from 5-phospho-alpha-D-ribose 1-diphosphate: step 3/9. Functionally, catalyzes the hydrolysis of the adenine ring of phosphoribosyl-AMP. The polypeptide is Phosphoribosyl-AMP cyclohydrolase (Rhizobium rhizogenes (strain K84 / ATCC BAA-868) (Agrobacterium radiobacter)).